Consider the following 685-residue polypeptide: Acetate--CoA ligase [ADP-forming] I (685 aa).

Residues 477 to 513 enclose the ATP-grasp domain; it reads LPVLEAYGIEVAPYGIARNVDEARDIAESIGYPVVLK. 503 to 514 is an ATP binding site; it reads AESIGYPVVLKV.

This sequence in the N-terminal section; belongs to the acetate CoA ligase alpha subunit family. It in the C-terminal section; belongs to the acetate CoA ligase beta subunit family. As to quaternary structure, homodimer.

The catalysed reaction is acetate + ATP + CoA = acetyl-CoA + ADP + phosphate. Activity requires divalent metal cations. Catalyzes the reversible formation of acetate and ATP from acetyl-CoA by using ADP and phosphate. Can use other substrates such as propionyl-CoA and butyryl-CoA, but not phenylacetyl-CoA. Seems to be involved primarily in the conversion of acetyl-CoA to acetate. Participates in the degradation of branched-chain amino acids via branched-chain-acyl-CoA esters. In Archaeoglobus fulgidus (strain ATCC 49558 / DSM 4304 / JCM 9628 / NBRC 100126 / VC-16), this protein is Acetate--CoA ligase [ADP-forming] I.